A 300-amino-acid chain; its full sequence is Ribosomal RNA small subunit methyltransferase H (300 aa).

S-adenosyl-L-methionine contacts are provided by residues 46-48 (GGH), aspartate 65, phenylalanine 92, aspartate 107, and glutamine 114.

Belongs to the methyltransferase superfamily. RsmH family.

Its subcellular location is the cytoplasm. The enzyme catalyses cytidine(1402) in 16S rRNA + S-adenosyl-L-methionine = N(4)-methylcytidine(1402) in 16S rRNA + S-adenosyl-L-homocysteine + H(+). Specifically methylates the N4 position of cytidine in position 1402 (C1402) of 16S rRNA. This chain is Ribosomal RNA small subunit methyltransferase H, found in Prochlorococcus marinus (strain MIT 9301).